The chain runs to 380 residues: Cystathionine gamma-synthase (380 aa).

N6-(pyridoxal phosphate)lysine is present on K195.

The protein belongs to the trans-sulfuration enzymes family. Homotetramer. Pyridoxal 5'-phosphate serves as cofactor.

Its subcellular location is the cytoplasm. The enzyme catalyses O-succinyl-L-homoserine + L-cysteine = L,L-cystathionine + succinate + H(+). It participates in amino-acid biosynthesis; L-methionine biosynthesis via de novo pathway; L-cystathionine from O-succinyl-L-homoserine: step 1/1. Four natural products, alpha-lapachone, 9-hydroxy-alpha-lapachone, Paulownin, and Yangambin, show strong inhibitory activities against CGS. All these four inhibitors prevent the binding of OSHS to CGS in a non-competitive fashion. These compounds are specific inhibitors against CGS from H.pylori relative to E.coli since they exhibit very low inhibition activities against CGS from E.coli. In terms of biological role, catalyzes the formation of L-cystathionine from O-succinyl-L-homoserine (OSHS) and L-cysteine, via a gamma-replacement reaction. In the absence of thiol, catalyzes gamma-elimination to form 2-oxobutanoate, succinate and ammonia. This chain is Cystathionine gamma-synthase (metB), found in Helicobacter pylori (Campylobacter pylori).